Consider the following 498-residue polypeptide: Ribulose bisphosphate carboxylase large chain (498 aa).

A propeptide spanning residues 1 to 2 (MS) is cleaved from the precursor. P3 is modified (N-acetylproline). K14 carries the N6,N6,N6-trimethyllysine modification. Substrate contacts are provided by N123 and T173. K175 acts as the Proton acceptor in catalysis. Residue K177 participates in substrate binding. Positions 201, 203, and 204 each coordinate Mg(2+). K201 carries the post-translational modification N6-carboxylysine. H294 functions as the Proton acceptor in the catalytic mechanism. Positions 295, 327, and 379 each coordinate substrate. Positions 473–498 (DTLDPNDKKQRDNEDTLADKFFGDKG) are disordered.

Belongs to the RuBisCO large chain family. Type I subfamily. Heterohexadecamer of 8 large chains and 8 small chains; disulfide-linked. The disulfide link is formed within the large subunit homodimers. Mg(2+) serves as cofactor. In terms of processing, the disulfide bond which can form in the large chain dimeric partners within the hexadecamer appears to be associated with oxidative stress and protein turnover.

It localises to the plastid. It catalyses the reaction 2 (2R)-3-phosphoglycerate + 2 H(+) = D-ribulose 1,5-bisphosphate + CO2 + H2O. It carries out the reaction D-ribulose 1,5-bisphosphate + O2 = 2-phosphoglycolate + (2R)-3-phosphoglycerate + 2 H(+). Functionally, ruBisCO catalyzes two reactions: the carboxylation of D-ribulose 1,5-bisphosphate, the primary event in carbon dioxide fixation, as well as the oxidative fragmentation of the pentose substrate in the photorespiration process. Both reactions occur simultaneously and in competition at the same active site. The protein is Ribulose bisphosphate carboxylase large chain of Cuscuta exaltata (Tall dodder).